Here is a 99-residue protein sequence, read N- to C-terminus: MARSFTNVKVLSALVADGFSNTTTRHGFAAAAAATQSATRGGASIGGNMVPKSGEEKVRGGEKVSWVPDPVTGYYRPENTNEIDVADMRATVLGKKFNQ.

Residues 40-62 (RGGASIGGNMVPKSGEEKVRGGE) form a disordered region. The segment covering 53 to 62 (SGEEKVRGGE) has biased composition (basic and acidic residues).

This chain is Indole-3-acetic acid-induced protein ARG2 (ARG2), found in Vigna radiata var. radiata (Mung bean).